The chain runs to 2346 residues: Acetyl-CoA carboxylase 1 (2346 aa).

Met-1 bears the N-acetylmethionine mark. A phosphoserine mark is found at Ser-5, Ser-23, Ser-25, Ser-29, Ser-34, Ser-48, Ser-50, and Ser-53. Thr-58 is subject to Phosphothreonine. Residue Ser-78 is modified to Phosphoserine. Ser-80 carries the phosphoserine; by AMPK modification. Positions 117-618 constitute a Biotin carboxylation domain; it reads VIEKVLIANN…GTGWLDRLIA (502 aa). Positions 275–466 constitute an ATP-grasp domain; that stretch reads SKRILNVPQE…LPAAQLQIAM (192 aa). 315-320 provides a ligand contact to ATP; sequence GGGGKG. Mg(2+) contacts are provided by Glu-424, Glu-437, and Asn-439. Mn(2+) is bound by residues Glu-424, Glu-437, and Asn-439. The active site involves Arg-441. Phosphothreonine is present on Thr-610. Residues 745-819 enclose the Biotinyl-binding domain; it reads FEKENDPSVL…DPGCVIAKMQ (75 aa). Lys-786 carries the post-translational modification N6-biotinyllysine. 4 positions are modified to phosphoserine: Ser-835, Ser-1201, Ser-1216, and Ser-1218. Thr-1227 carries the post-translational modification Phosphothreonine. A phosphoserine mark is found at Ser-1259, Ser-1263, and Ser-1273. The residue at position 1334 (Lys-1334) is an N6-acetyllysine. Residues 1576–1914 form the CoA carboxyltransferase N-terminal domain; the sequence is PYVTKDQLQS…SVYSSVPLLN (339 aa). Residues 1576–2234 form a carboxyltransferase region; sequence PYVTKDQLQS…EDLVKKKIHN (659 aa). Arg-1823, Lys-2127, and Arg-2129 together coordinate CoA. Residues 1918-2234 form the CoA carboxyltransferase C-terminal domain; the sequence is PIDRVIEFVP…EDLVKKKIHN (317 aa). Thr-2153 is modified (phosphothreonine).

Monomer, homodimer, and homotetramer. Can form filamentous polymers. Interacts in its inactive phosphorylated form with the BRCT domains of BRCA1 which prevents ACACA dephosphorylation and inhibits lipid synthesis. Interacts with MID1IP1; interaction with MID1IP1 promotes oligomerization and increases its activity. The cofactor is Mg(2+). Mn(2+) is required as a cofactor. Biotin serves as cofactor. In terms of processing, phosphorylation on Ser-1263 is required for interaction with BRCA1. Post-translationally, phosphorylation at Ser-80 by AMPK inactivates enzyme activity. The biotin cofactor is covalently attached to the central biotinyl-binding domain and is required for the catalytic activity.

Its subcellular location is the cytoplasm. The protein resides in the cytosol. The enzyme catalyses hydrogencarbonate + acetyl-CoA + ATP = malonyl-CoA + ADP + phosphate + H(+). Its pathway is lipid metabolism; malonyl-CoA biosynthesis; malonyl-CoA from acetyl-CoA: step 1/1. With respect to regulation, inhibited by phosphorylation. Citrate promotes oligomerization of the protein into filaments that correspond to the most active form of the carboxylase. Cytosolic enzyme that catalyzes the carboxylation of acetyl-CoA to malonyl-CoA, the first and rate-limiting step of de novo fatty acid biosynthesis. This is a 2 steps reaction starting with the ATP-dependent carboxylation of the biotin carried by the biotin carboxyl carrier (BCC) domain followed by the transfer of the carboxyl group from carboxylated biotin to acetyl-CoA. The chain is Acetyl-CoA carboxylase 1 from Bos taurus (Bovine).